Consider the following 146-residue polypeptide: Protein PBDC1 homolog (146 aa).

Belongs to the PBDC1 family.

It localises to the cytoplasm. In Saccharomyces cerevisiae (strain ATCC 204508 / S288c) (Baker's yeast), this protein is Protein PBDC1 homolog.